We begin with the raw amino-acid sequence, 698 residues long: Polyribonucleotide nucleotidyltransferase (698 aa).

Residues Asp486 and Asp492 each contribute to the Mg(2+) site. One can recognise a KH domain in the interval 553–612 (PRIIVRNIPKDRIGELIGPGGKNVRGISELTGAELYIEDDGKVTISGSNQESAEKAAKMV). The S1 motif domain occupies 622–690 (GKIYEGKVKR…KTGKIDLSRK (69 aa)).

The protein belongs to the polyribonucleotide nucleotidyltransferase family. Mg(2+) serves as cofactor.

Its subcellular location is the cytoplasm. It catalyses the reaction RNA(n+1) + phosphate = RNA(n) + a ribonucleoside 5'-diphosphate. In terms of biological role, involved in mRNA degradation. Catalyzes the phosphorolysis of single-stranded polyribonucleotides processively in the 3'- to 5'-direction. The sequence is that of Polyribonucleotide nucleotidyltransferase from Leptospira interrogans serogroup Icterohaemorrhagiae serovar copenhageni (strain Fiocruz L1-130).